The sequence spans 166 residues: Transcriptional repressor NrdR (166 aa).

Residues 3-34 (CPFCGHDDTQVKDSRSTEDGVAIRRRRVCSAC) fold into a zinc finger. The ATP-cone domain occupies 49-139 (LSVTKADGRR…VYRDFREVEA (91 aa)). The disordered stretch occupies residues 146 to 166 (DMKPIPGETDTPSPDDSQETP).

It belongs to the NrdR family. Zn(2+) is required as a cofactor.

In terms of biological role, negatively regulates transcription of bacterial ribonucleotide reductase nrd genes and operons by binding to NrdR-boxes. The protein is Transcriptional repressor NrdR of Gluconobacter oxydans (strain 621H) (Gluconobacter suboxydans).